The following is a 201-amino-acid chain: Peptidyl-tRNA hydrolase (201 aa).

Tyrosine 14 contributes to the tRNA binding site. Catalysis depends on histidine 19, which acts as the Proton acceptor. TRNA-binding residues include tyrosine 64, asparagine 66, and asparagine 112.

Belongs to the PTH family. As to quaternary structure, monomer.

It is found in the cytoplasm. The enzyme catalyses an N-acyl-L-alpha-aminoacyl-tRNA + H2O = an N-acyl-L-amino acid + a tRNA + H(+). Hydrolyzes ribosome-free peptidyl-tRNAs (with 1 or more amino acids incorporated), which drop off the ribosome during protein synthesis, or as a result of ribosome stalling. Its function is as follows. Catalyzes the release of premature peptidyl moieties from peptidyl-tRNA molecules trapped in stalled 50S ribosomal subunits, and thus maintains levels of free tRNAs and 50S ribosomes. In Afipia carboxidovorans (strain ATCC 49405 / DSM 1227 / KCTC 32145 / OM5) (Oligotropha carboxidovorans), this protein is Peptidyl-tRNA hydrolase.